A 134-amino-acid chain; its full sequence is MASDPMSVNSSAREPPAPPGSGADEPKYGGYTRFELELEFVQALGNPLYLNHLASRKLLSNPAFIAYLDYLQYWSRPPYLKYITYPGPTLKNLELLQQEKFRQDIISPDLVERLRLEGMKAGIDWHRESFPSTA.

Residues 1 to 12 (MASDPMSVNSSA) are compositionally biased toward polar residues. The segment at 1 to 28 (MASDPMSVNSSAREPPAPPGSGADEPKY) is disordered.

Belongs to the Mediator complex subunit 31 family. As to quaternary structure, component of the Mediator complex.

It localises to the nucleus. Functionally, component of the Mediator complex, a coactivator involved in the regulated transcription of nearly all RNA polymerase II-dependent genes. Mediator functions as a bridge to convey information from gene-specific regulatory proteins to the basal RNA polymerase II transcription machinery. Mediator is recruited to promoters by direct interactions with regulatory proteins and serves as a scaffold for the assembly of a functional preinitiation complex with RNA polymerase II and the general transcription factors. This chain is Mediator of RNA polymerase II transcription subunit 31 (soh1), found in Neurospora crassa (strain ATCC 24698 / 74-OR23-1A / CBS 708.71 / DSM 1257 / FGSC 987).